The following is a 462-amino-acid chain: NAD(P) transhydrogenase subunit beta (462 aa).

Over 1-3 (MSG) the chain is Periplasmic. A helical membrane pass occupies residues 4–24 (GLVTAAYIVAAILFIFSLAGL). Over 25 to 45 (SKHETSRQGNNFGIAGMAIAL) the chain is Cytoplasmic. The helical transmembrane segment at 46–66 (IATIFGPDTGNVGWILLAMVI) threads the bilayer. Over 67–82 (GGAIGIRLAKKVEMTE) the chain is Periplasmic. Residues 83 to 103 (MPELVAILHSFVGLAAVLVGF) form a helical membrane-spanning segment. The Cytoplasmic portion of the chain corresponds to 104–115 (NSYLHHDAGMAP). Residues 116 to 136 (ILVNIHLTEVFLGIFIGAVTF) traverse the membrane as a helical segment. Residues 137–164 (TGSVVAFGKLCGKISSKPLMLPNRHKMN) are Periplasmic-facing. Residues 165-185 (LAALVVSFLLLIVFVRTDSVG) form a helical membrane-spanning segment. The Cytoplasmic segment spans residues 186–188 (LQV). The helical transmembrane segment at 189-209 (LALLIMTAIALVFGWHLVASI) threads the bilayer. The Periplasmic segment spans residues 210 to 215 (GGADMP). The chain crosses the membrane as a helical span at residues 216 to 236 (VVVSMLNSYSGWAAAAAGFML). Over 237-239 (SND) the chain is Cytoplasmic. The helical transmembrane segment at 240–260 (LLIVTGALVGSSGAILSYIMC) threads the bilayer. Over 261–308 (KAMNRSFISVIAGGFGTDGSSTGDDQEVGEHREITAEETAELLKNSHS) the chain is Periplasmic. A helical membrane pass occupies residues 309 to 329 (VIITPGYGMAVAQAQYPVAEI). Over 330-462 (TEKLRARGIN…ASVDAILKAL (133 aa)) the chain is Cytoplasmic.

This sequence belongs to the PNT beta subunit family. In terms of assembly, heterodimer of an alpha and a beta chain.

The protein localises to the cell inner membrane. The enzyme catalyses NAD(+) + NADPH + H(+)(in) = NADH + NADP(+) + H(+)(out). The transhydrogenation between NADH and NADP is coupled to respiration and ATP hydrolysis and functions as a proton pump across the membrane. The protein is NAD(P) transhydrogenase subunit beta (pntB) of Escherichia coli O157:H7.